Here is an 894-residue protein sequence, read N- to C-terminus: DNA mismatch repair protein MutS (894 aa).

ATP is bound at residue 632–639; sequence GPNMGGKS.

The protein belongs to the DNA mismatch repair MutS family.

Functionally, this protein is involved in the repair of mismatches in DNA. It is possible that it carries out the mismatch recognition step. This protein has a weak ATPase activity. This Paraburkholderia xenovorans (strain LB400) protein is DNA mismatch repair protein MutS.